The primary structure comprises 312 residues: Ribonuclease Z (312 aa).

His-62, His-64, Asp-66, His-67, His-144, Asp-215, and His-273 together coordinate Zn(2+). The Proton acceptor role is filled by Asp-66.

The protein belongs to the RNase Z family. Homodimer. Zn(2+) is required as a cofactor.

The enzyme catalyses Endonucleolytic cleavage of RNA, removing extra 3' nucleotides from tRNA precursor, generating 3' termini of tRNAs. A 3'-hydroxy group is left at the tRNA terminus and a 5'-phosphoryl group is left at the trailer molecule.. In terms of biological role, zinc phosphodiesterase, which displays some tRNA 3'-processing endonuclease activity. Probably involved in tRNA maturation, by removing a 3'-trailer from precursor tRNA. This is Ribonuclease Z from Prochlorococcus marinus subsp. pastoris (strain CCMP1986 / NIES-2087 / MED4).